The chain runs to 362 residues: Leucoanthocyanidin dioxygenase (362 aa).

The tract at residues 1–23 (MVTSAMGPSPRVEELARSGLDTI) is disordered. The region spanning 214 to 313 (LIVQMKINFY…RISWAVFCEP (100 aa)) is the Fe2OG dioxygenase domain. Fe cation is bound by residues histidine 238, aspartate 240, and histidine 294. Residue arginine 304 is part of the active site.

It belongs to the iron/ascorbate-dependent oxidoreductase family. It depends on Fe cation as a cofactor. L-ascorbate is required as a cofactor. In terms of tissue distribution, expressed in red but not in green forma of P.frutescens. In red forma, it is predominantly expressed in stems and leaves, but not in roots.

It catalyses the reaction a (2R,3S,4S)-leucoanthocyanidin + 2-oxoglutarate + O2 = a 4-H-anthocyanidin with a 3-hydroxy group + succinate + CO2 + 2 H2O. The protein operates within pigment biosynthesis; anthocyanin biosynthesis. Oxidation of leucoanthocyanidins into anthocyanidins. In Perilla frutescens (Beefsteak mint), this protein is Leucoanthocyanidin dioxygenase (ANS).